We begin with the raw amino-acid sequence, 298 residues long: Apolipoprotein E (298 aa).

An N-terminal signal peptide occupies residues 1-18; that stretch reads MKVLWAALVVTLLAGCRA. Repeat copies occupy residues 74-95, 96-117, 118-139, 140-161, 162-183, 184-204, 205-222, and 223-244. The tract at residues 74 to 244 is 8 X 22 AA approximate tandem repeats; it reads LLIEDTMKEV…RLEEVREQME (171 aa). Residue methionine 137 is modified to Methionine sulfoxide. A Phosphoserine modification is found at serine 141. An LDL and other lipoprotein receptors binding region spans residues 152–162; sequence HPRKMKRRLQR. 156-159 is a binding site for heparin; sequence MKRR. Position 218-225 (218-225) interacts with heparin; the sequence is GEQMRGRL. The interval 260 to 272 is specificity for association with VLDL; that stretch reads RLKSWFEPMMEDM.

This sequence belongs to the apolipoprotein A1/A4/E family. Homotetramer. May interact with ABCA1; functionally associated with ABCA1 in the biogenesis of HDLs. May interact with APP/A4 amyloid-beta peptide; the interaction is extremely stable in vitro but its physiological significance is unclear. May interact with MAPT. May interact with MAP2. In the cerebrospinal fluid, interacts with secreted SORL1. Interacts with PMEL; this allows the loading of PMEL luminal fragment on ILVs to induce fibril nucleation. APOE exists as multiple glycosylated and sialylated glycoforms within cells and in plasma. The extent of glycosylation and sialylation are tissue and context specific. In terms of processing, glycated in plasma VLDL. Post-translationally, phosphorylated by FAM20C in the extracellular medium.

It is found in the secreted. It localises to the extracellular space. The protein resides in the extracellular matrix. Its subcellular location is the extracellular vesicle. The protein localises to the endosome. It is found in the multivesicular body. In terms of biological role, APOE is an apolipoprotein, a protein associating with lipid particles, that mainly functions in lipoprotein-mediated lipid transport between organs via the plasma and interstitial fluids. APOE is a core component of plasma lipoproteins and is involved in their production, conversion and clearance. Apolipoproteins are amphipathic molecules that interact both with lipids of the lipoprotein particle core and the aqueous environment of the plasma. As such, APOE associates with chylomicrons, chylomicron remnants, very low density lipoproteins (VLDL) and intermediate density lipoproteins (IDL) but shows a preferential binding to high-density lipoproteins (HDL). It also binds a wide range of cellular receptors including the LDL receptor/LDLR and the very low-density lipoprotein receptor/VLDLR that mediate the cellular uptake of the APOE-containing lipoprotein particles. Finally, APOE also has a heparin-binding activity and binds heparan-sulfate proteoglycans on the surface of cells, a property that supports the capture and the receptor-mediated uptake of APOE-containing lipoproteins by cells. This Cavia porcellus (Guinea pig) protein is Apolipoprotein E (APOE).